Consider the following 476-residue polypeptide: Cytoplasmic 60S subunit biogenesis factor ZNF622 (476 aa).

At Ala2 the chain carries N-acetylalanine. 2 U1-type zinc fingers span residues 4–28 (LTCI…TDWH) and 69–93 (TYCT…SRRH). The interval 137–243 (AIKAQPSTSP…AEDAAAEESP (107 aa)) is disordered. Positions 167 to 177 (VPERDPTEKPP) are enriched in basic and acidic residues. A compositionally biased stretch (acidic residues) spans 195 to 239 (EDGEEEGEEEEEDDEDEDWEDIDSDDGLECEDPGVEDQDAEDAAA). Phosphoserine is present on Ser275.

This sequence belongs to the REI1 family. In terms of assembly, homo- and heterodimer. Associates with pre-60S ribosomal particles. Interacts with MELK and MYBL2. Interacts with DNAJC21. In terms of processing, phosphorylated by MELK. The phosphorylation may redirect the protein to the nucleus. Post-translationally, ubiquitinated by HECTD1, leading to its degradation.

The protein resides in the cytoplasm. Its subcellular location is the nucleus. Its function is as follows. Pre-60S-associated cytoplasmic factor involved in the cytoplasmic maturation of the 60S subunit. In Mus musculus (Mouse), this protein is Cytoplasmic 60S subunit biogenesis factor ZNF622 (Znf622).